Here is a 79-residue protein sequence, read N- to C-terminus: Large ribosomal subunit protein bL31 (79 aa).

This sequence belongs to the bacterial ribosomal protein bL31 family. Type A subfamily. Part of the 50S ribosomal subunit.

Its function is as follows. Binds the 23S rRNA. The sequence is that of Large ribosomal subunit protein bL31 from Trichormus variabilis (strain ATCC 29413 / PCC 7937) (Anabaena variabilis).